Here is a 303-residue protein sequence, read N- to C-terminus: Flavin-dependent thymidylate synthase (303 aa).

One can recognise a ThyX domain in the interval 41 to 258 (GKVALVDTMP…PVACEAFIDY (218 aa)). Residues Ser95, 118 to 120 (RHR), and Glu126 each bind FAD. DUMP is bound by residues 115-118 (QWIR), 126-130 (EYSAR), and Arg197. Residues 118–128 (RHRTANVNEYS) carry the ThyX motif motif. FAD is bound by residues 213-215 (DLH) and His219. A dUMP-binding site is contributed by Arg224. Arg224 acts as the Involved in ionization of N3 of dUMP, leading to its activation in catalysis.

This sequence belongs to the thymidylate synthase ThyX family. In terms of assembly, homotetramer. Requires FAD as cofactor.

The catalysed reaction is dUMP + (6R)-5,10-methylene-5,6,7,8-tetrahydrofolate + NADPH + H(+) = dTMP + (6S)-5,6,7,8-tetrahydrofolate + NADP(+). It functions in the pathway pyrimidine metabolism; dTTP biosynthesis. Functionally, catalyzes the reductive methylation of 2'-deoxyuridine-5'-monophosphate (dUMP) to 2'-deoxythymidine-5'-monophosphate (dTMP) while utilizing 5,10-methylenetetrahydrofolate (mTHF) as the methyl donor, and NADPH and FADH(2) as the reductant. This is Flavin-dependent thymidylate synthase (thyA) from Dictyostelium discoideum (Social amoeba).